The following is a 125-amino-acid chain: Prefoldin subunit beta (125 aa).

Belongs to the prefoldin subunit beta family. As to quaternary structure, heterohexamer of two alpha and four beta subunits.

It localises to the cytoplasm. In terms of biological role, molecular chaperone capable of stabilizing a range of proteins. Seems to fulfill an ATP-independent, HSP70-like function in archaeal de novo protein folding. The protein is Prefoldin subunit beta of Pyrobaculum calidifontis (strain DSM 21063 / JCM 11548 / VA1).